Here is a 245-residue protein sequence, read N- to C-terminus: 1-(5-phosphoribosyl)-5-[(5-phosphoribosylamino)methylideneamino] imidazole-4-carboxamide isomerase (245 aa).

Asp8 (proton acceptor) is an active-site residue. Catalysis depends on Asp129, which acts as the Proton donor.

It belongs to the HisA/HisF family.

Its subcellular location is the cytoplasm. It carries out the reaction 1-(5-phospho-beta-D-ribosyl)-5-[(5-phospho-beta-D-ribosylamino)methylideneamino]imidazole-4-carboxamide = 5-[(5-phospho-1-deoxy-D-ribulos-1-ylimino)methylamino]-1-(5-phospho-beta-D-ribosyl)imidazole-4-carboxamide. Its pathway is amino-acid biosynthesis; L-histidine biosynthesis; L-histidine from 5-phospho-alpha-D-ribose 1-diphosphate: step 4/9. The polypeptide is 1-(5-phosphoribosyl)-5-[(5-phosphoribosylamino)methylideneamino] imidazole-4-carboxamide isomerase (Geotalea uraniireducens (strain Rf4) (Geobacter uraniireducens)).